The primary structure comprises 287 residues: Ribosomal RNA-processing protein 8 (287 aa).

The disordered stretch occupies residues 1 to 62 (MTTEENKTSR…SAPSKRPKPS (62 aa)). The span at 9–21 (SRNRKRKRQRNPK) shows a compositional bias: basic residues. A compositionally biased stretch (basic and acidic residues) spans 35-46 (QNEKKNQRDTKN). S-adenosyl-L-methionine is bound by residues His-107, Gly-142, Asp-160, Asp-172, Met-173, and Cys-189.

It belongs to the methyltransferase superfamily. RRP8 family.

Its subcellular location is the nucleus. It is found in the nucleolus. In terms of biological role, probable methyltransferase required to silence rDNA. The sequence is that of Ribosomal RNA-processing protein 8 from Arabidopsis thaliana (Mouse-ear cress).